The following is a 547-amino-acid chain: Probable terpene synthase 3 (547 aa).

Mg(2+)-binding residues include D298, D302, and E451. A DDXXD motif motif is present at residues 298–302; sequence DDIYD.

It belongs to the terpene synthase family. Mg(2+) is required as a cofactor.

Functionally, probable sesquiterpene synthase. The polypeptide is Probable terpene synthase 3 (TPS3) (Ricinus communis (Castor bean)).